We begin with the raw amino-acid sequence, 473 residues long: Phosphatidylserine synthase 1 (473 aa).

At A2 the chain carries N-acetylalanine. Residues 2-35 (ASCVGSRTLSKDDVNYKMHFRMINEQQVEDITID) lie on the Cytoplasmic side of the membrane. A helical transmembrane segment spans residues 36-56 (FFYRPHTITLLSFTIVSLMYF). At 57 to 72 (AFTRDDSVPEDNIWRG) the chain is on the lumenal side. Residues 73–93 (ILSVIFFFLIISVLAFPNGPF) traverse the membrane as a helical segment. The Cytoplasmic segment spans residues 94–102 (TRPHPALWR). A helical transmembrane segment spans residues 103-123 (MVFGLSVLYFLFLVFLLFLNF). The Lumenal segment spans residues 124 to 186 (EQVKSLMYWL…AMKALLIRSY (63 aa)). Residues 187-207 (GLCWTISITWELTELFFMHLL) traverse the membrane as a helical segment. Residues 208–216 (PNFAECWWD) are Cytoplasmic-facing. The chain crosses the membrane as a helical span at residues 217-237 (QVILDILLCNGGGIWLGMVVC). Residues 238-286 (RFLEMRTYHWASFKDIHTTTGKIKRAVLQFTPASWTYVRWFDPKSSFQR) are Lumenal-facing. Residues 287 to 307 (VAGVYLFMIIWQLTELNTFFL) traverse the membrane as a helical segment. Residues 308–319 (KHIFVFQASHPL) are Cytoplasmic-facing. The chain crosses the membrane as a helical span at residues 320 to 342 (SWGRILFIGGITAPTVRQYYAYL). The Lumenal portion of the chain corresponds to 343-355 (TDTQCKRVGTQCW). Residues 356-376 (VFGVIGFLEAIVCIKFGQDLF) traverse the membrane as a helical segment. Over 377–383 (SKTQILY) the chain is Cytoplasmic. The helical transmembrane segment at 384-404 (VVLWLLCVAFTTFLCLYGMIW) threads the bilayer. The Lumenal portion of the chain corresponds to 405 to 473 (YAEHYGHREK…SKVTNGVGKK (69 aa)). 4 positions are modified to phosphoserine: S417, S425, S442, and S454. The disordered stretch occupies residues 430–473 (WHHRKGTKGSEDSPPKHAGNNESHSSRRRNRHSKSKVTNGVGKK). A compositionally biased stretch (basic residues) spans 455–464 (SRRRNRHSKS).

The protein belongs to the phosphatidyl serine synthase family.

Its subcellular location is the endoplasmic reticulum membrane. The enzyme catalyses a 1,2-diacyl-sn-glycero-3-phosphoethanolamine + L-serine = a 1,2-diacyl-sn-glycero-3-phospho-L-serine + ethanolamine. The catalysed reaction is a 1,2-diacyl-sn-glycero-3-phosphocholine + L-serine = a 1,2-diacyl-sn-glycero-3-phospho-L-serine + choline. The protein operates within phospholipid metabolism; phosphatidylserine biosynthesis. Requires calcium ions. Inhibited by exogenous phosphatidylserine. In terms of biological role, catalyzes a base-exchange reaction in which the polar head group of phosphatidylethanolamine (PE) or phosphatidylcholine (PC) is replaced by L-serine. Catalyzes mainly the conversion of phosphatidylcholine. Also converts, in vitro and to a lesser extent, phosphatidylethanolamine. This Homo sapiens (Human) protein is Phosphatidylserine synthase 1 (PTDSS1).